The following is a 61-amino-acid chain: UPF0434 protein PA14_25520 (61 aa).

The protein belongs to the UPF0434 family.

This is UPF0434 protein PA14_25520 from Pseudomonas aeruginosa (strain UCBPP-PA14).